Here is a 241-residue protein sequence, read N- to C-terminus: Probable transcriptional regulatory protein SAR11_0592 (241 aa).

Residues 1–24 (MSGHSKWASIKHSKGKADKQRSKV) form a disordered region.

Belongs to the TACO1 family.

It is found in the cytoplasm. This is Probable transcriptional regulatory protein SAR11_0592 from Pelagibacter ubique (strain HTCC1062).